We begin with the raw amino-acid sequence, 405 residues long: Protein PAG1 (405 aa).

Residues Met-1–Ala-50 form the signal peptide. 4 N-linked (GlcNAc...) asparagine glycosylation sites follow: Asn-55, Asn-104, Asn-256, and Asn-351. Ala-391 carries GPI-anchor amidated alanine lipidation. The propeptide at Asp-392–Phe-405 is removed in mature form.

The protein localises to the cell membrane. This is Protein PAG1 (PAG1) from Trypanosoma brucei brucei.